The chain runs to 53 residues: U13-myrmicitoxin-Tb1a (53 aa).

The first 23 residues, 1-23, serve as a signal peptide directing secretion; sequence MKLIYIFSLVAVIAVTMIPGIMG. Residues 24 to 29 constitute a propeptide that is removed on maturation; the sequence is EAEAEG. K52 bears the Lysine amide mark.

Expressed by the venom gland.

Its subcellular location is the secreted. In vivo, this neurotoxin paralyzes about 70% of blowflies (L.caesar) one hour after intrathoracic injection, when tested at high doses (45 nmol/g). In Tetramorium bicarinatum (Tramp ant), this protein is U13-myrmicitoxin-Tb1a.